The sequence spans 548 residues: Biotin-dependent acetyl-/propionyl-coenzyme A carboxylase beta5 subunit (548 aa).

The interval 1 to 23 (MTSVTDRSAHSAERSTEHTIDIH) is disordered. Over residues 7-21 (RSAHSAERSTEHTID) the composition is skewed to basic and acidic residues. The CoA carboxyltransferase N-terminal domain occupies 25 to 281 (TAGKLAELHK…NNSTDAPRYQ (257 aa)). A CoA carboxyltransferase C-terminal domain is found at 295 to 541 (DEDLELDTLI…ERKIAQLPPK (247 aa)).

The protein belongs to the AccD/PCCB family. Forms homohexamers. The biotin-dependent acyl-CoA carboxylase complex is composed of AccA3, which contains the biotin carboxylase (BC) and biotin carboxyl carrier protein (BCCP) domains, and AccD5, which contains the carboxyl transferase (CT) domain. The AccA3/AccD5 complex forms a dodecamer, and can associate with the epsilon subunit AccE5 (Rv3280), which stimulates carboxylation by the complex. Is also part of the long-chain acyl-CoA carboxylase (LCC) complex, which is composed of AccA3, AccD4, AccD5 and AccE5. The four subunits are essential for activity, but AccD5, together with AccE5, probably plays a structural role rather than a catalytic one.

It catalyses the reaction N(6)-carboxybiotinyl-L-lysyl-[protein] + acetyl-CoA = N(6)-biotinyl-L-lysyl-[protein] + malonyl-CoA. The catalysed reaction is N(6)-carboxybiotinyl-L-lysyl-[protein] + propanoyl-CoA = methylmalonyl-CoA + N(6)-biotinyl-L-lysyl-[protein]. It functions in the pathway lipid metabolism; mycolic acid biosynthesis. Its activity is regulated as follows. Carboxylase activity of the AccA3/AccD5 complex is stimulated by interaction with AccE5. In terms of biological role, component of a biotin-dependent acyl-CoA carboxylase complex. This subunit transfers the CO2 from carboxybiotin to the CoA ester substrate. When associated with the alpha3 subunit AccA3, is involved in the carboxylation of acetyl-CoA and propionyl-CoA, with a preference for propionyl-CoA. Is also required for the activity of the long-chain acyl-CoA carboxylase (LCC) complex. This chain is Biotin-dependent acetyl-/propionyl-coenzyme A carboxylase beta5 subunit, found in Mycobacterium tuberculosis (strain ATCC 25618 / H37Rv).